Reading from the N-terminus, the 164-residue chain is Small ribosomal subunit protein uS5 (164 aa).

Residues 10 to 73 (LEERVVAVNR…DDAKKNLIEV (64 aa)) enclose the S5 DRBM domain.

This sequence belongs to the universal ribosomal protein uS5 family. Part of the 30S ribosomal subunit. Contacts proteins S4 and S8.

With S4 and S12 plays an important role in translational accuracy. Its function is as follows. Located at the back of the 30S subunit body where it stabilizes the conformation of the head with respect to the body. The protein is Small ribosomal subunit protein uS5 of Streptococcus pneumoniae serotype 2 (strain D39 / NCTC 7466).